A 276-amino-acid chain; its full sequence is Neuroendocrine protein 7B2 (276 aa).

Cysteines 155 and 168 form a disulfide.

The protein belongs to the 7B2 family. As to quaternary structure, interacts with amon/PC2 early in the secretory pathway. Dissociation occurs at later stages.

The protein resides in the secreted. Functionally, acts as a molecular chaperone for neuroendocrine convertase amon/PC2, preventing its premature activation in the regulated secretory pathway. Binds to inactive amon in the endoplasmic reticulum and facilitates its transport from there to later compartments of the secretory pathway where it is proteolytically matured and activated. Also required for cleavage of amon. This chain is Neuroendocrine protein 7B2, found in Drosophila melanogaster (Fruit fly).